The sequence spans 456 residues: Bifunctional protein GlmU (456 aa).

The pyrophosphorylase stretch occupies residues 1–227 (MKLRVVILAA…AQEVEGANNR (227 aa)). UDP-N-acetyl-alpha-D-glucosamine contacts are provided by residues 8-11 (LAAG), Lys22, Gln73, 78-79 (GT), 100-102 (YGD), Gly137, Glu152, Asn167, and Asn225. Asp102 is a Mg(2+) binding site. Residue Asn225 coordinates Mg(2+). Residues 228–248 (QQLASLERALQQRQAEELMTQ) are linker. The N-acetyltransferase stretch occupies residues 249–456 (GVTLIDPARF…WQRPQSKKGT (208 aa)). Positions 331 and 349 each coordinate UDP-N-acetyl-alpha-D-glucosamine. Residue His361 is the Proton acceptor of the active site. Positions 364 and 375 each coordinate UDP-N-acetyl-alpha-D-glucosamine. Residues Ala378, 384–385 (NY), Ser403, Ala421, and Arg438 each bind acetyl-CoA.

This sequence in the N-terminal section; belongs to the N-acetylglucosamine-1-phosphate uridyltransferase family. It in the C-terminal section; belongs to the transferase hexapeptide repeat family. As to quaternary structure, homotrimer. The cofactor is Mg(2+).

The protein localises to the cytoplasm. The catalysed reaction is alpha-D-glucosamine 1-phosphate + acetyl-CoA = N-acetyl-alpha-D-glucosamine 1-phosphate + CoA + H(+). It carries out the reaction N-acetyl-alpha-D-glucosamine 1-phosphate + UTP + H(+) = UDP-N-acetyl-alpha-D-glucosamine + diphosphate. It functions in the pathway nucleotide-sugar biosynthesis; UDP-N-acetyl-alpha-D-glucosamine biosynthesis; N-acetyl-alpha-D-glucosamine 1-phosphate from alpha-D-glucosamine 6-phosphate (route II): step 2/2. It participates in nucleotide-sugar biosynthesis; UDP-N-acetyl-alpha-D-glucosamine biosynthesis; UDP-N-acetyl-alpha-D-glucosamine from N-acetyl-alpha-D-glucosamine 1-phosphate: step 1/1. The protein operates within bacterial outer membrane biogenesis; LPS lipid A biosynthesis. In terms of biological role, catalyzes the last two sequential reactions in the de novo biosynthetic pathway for UDP-N-acetylglucosamine (UDP-GlcNAc). The C-terminal domain catalyzes the transfer of acetyl group from acetyl coenzyme A to glucosamine-1-phosphate (GlcN-1-P) to produce N-acetylglucosamine-1-phosphate (GlcNAc-1-P), which is converted into UDP-GlcNAc by the transfer of uridine 5-monophosphate (from uridine 5-triphosphate), a reaction catalyzed by the N-terminal domain. The sequence is that of Bifunctional protein GlmU from Idiomarina loihiensis (strain ATCC BAA-735 / DSM 15497 / L2-TR).